Here is a 206-residue protein sequence, read N- to C-terminus: Superoxide dismutase [Mn] (206 aa).

Mn(2+)-binding residues include histidine 27, histidine 82, aspartate 168, and histidine 172.

The protein belongs to the iron/manganese superoxide dismutase family. As to quaternary structure, homodimer. Requires Mn(2+) as cofactor.

The enzyme catalyses 2 superoxide + 2 H(+) = H2O2 + O2. Its function is as follows. Destroys superoxide anion radicals which are normally produced within the cells and which are toxic to biological systems. In Salmonella typhimurium (strain LT2 / SGSC1412 / ATCC 700720), this protein is Superoxide dismutase [Mn] (sodA).